We begin with the raw amino-acid sequence, 283 residues long: Undecaprenyl-diphosphatase (283 aa).

Transmembrane regions (helical) follow at residues Gly-40–Phe-60, Ala-85–Phe-105, Leu-113–Ala-133, Ile-153–Ser-173, Ala-193–Leu-213, Leu-227–Phe-247, and Val-259–Met-279.

The protein belongs to the UppP family.

The protein resides in the cell inner membrane. It catalyses the reaction di-trans,octa-cis-undecaprenyl diphosphate + H2O = di-trans,octa-cis-undecaprenyl phosphate + phosphate + H(+). Functionally, catalyzes the dephosphorylation of undecaprenyl diphosphate (UPP). Confers resistance to bacitracin. This chain is Undecaprenyl-diphosphatase, found in Chlorobium limicola (strain DSM 245 / NBRC 103803 / 6330).